Consider the following 966-residue polypeptide: Probable transport protein MmpL11 (966 aa).

Helical transmembrane passes span tryptophan 13–glutamine 33, isoleucine 188–alanine 208, valine 214–valine 234, threonine 235–methionine 255, glycine 279–isoleucine 299, alanine 311–alanine 331, alanine 373–glycine 393, threonine 527–isoleucine 547, valine 557–tryptophan 577, valine 595–leucine 615, alanine 646–alanine 666, and isoleucine 668–valine 688.

The protein belongs to the resistance-nodulation-cell division (RND) (TC 2.A.6) family. MmpL subfamily.

It is found in the cell membrane. The sequence is that of Probable transport protein MmpL11 (mmpL11) from Mycobacterium bovis (strain ATCC BAA-935 / AF2122/97).